A 168-amino-acid polypeptide reads, in one-letter code: MRTQSISSHNVQSSSFSANQHAAETSISAGGIISEIVYNADQPIVTHLLLPLLQQLGTQSRWLLWLSPQQKLSRPWVQQSGLPLDKMVQLHHINPLFTVDAMERALLTGNYSAVLCWLPHELTEEEKVRLRHAAQAGNTYGFIMRPESTGGDAYRLFPSLKIHSTLYH.

The tract at residues 105 to 111 (ALLTGNY) is ftsZ binding. Positions 161 to 168 (KIHSTLYH) are lon protease binding.

This sequence belongs to the SulA family. Interacts with FtsZ. Post-translationally, is rapidly cleaved and degraded by the Lon protease once DNA damage is repaired.

Its function is as follows. Component of the SOS system and an inhibitor of cell division. Accumulation of SulA causes rapid cessation of cell division and the appearance of long, non-septate filaments. In the presence of GTP, binds a polymerization-competent form of FtsZ in a 1:1 ratio, thus inhibiting FtsZ polymerization and therefore preventing it from participating in the assembly of the Z ring. This mechanism prevents the premature segregation of damaged DNA to daughter cells during cell division. The polypeptide is Cell division inhibitor SulA (Pectobacterium carotovorum subsp. carotovorum (strain PC1)).